Consider the following 344-residue polypeptide: Cyclin-dependent kinase 20 (344 aa).

The region spanning 4–288 (YSILGRIGEG…ARQALLHPYF (285 aa)) is the Protein kinase domain. Residues 10 to 18 (IGEGAHGIV) and K33 contribute to the ATP site. D127 serves as the catalytic Proton acceptor.

This sequence belongs to the protein kinase superfamily. CMGC Ser/Thr protein kinase family. CDC2/CDKX subfamily. In terms of assembly, monomer. Interacts with tbc1d32.

The protein resides in the nucleus. It localises to the cytoplasm. Its subcellular location is the cell projection. The protein localises to the cilium. It catalyses the reaction L-seryl-[protein] + ATP = O-phospho-L-seryl-[protein] + ADP + H(+). The enzyme catalyses L-threonyl-[protein] + ATP = O-phospho-L-threonyl-[protein] + ADP + H(+). Its function is as follows. Involved in cell growth. Activates cdk2, a kinase involved in the control of the cell cycle, by phosphorylating residue 'Thr-160'. Required for high-level Shh responses in the developing neural tube. Together with tbc1d32, controls the structure of the primary cilium by coordinating assembly of the ciliary membrane and axoneme, allowing gli2 to be properly activated in response to SHH signaling. This is Cyclin-dependent kinase 20 (cdk20) from Danio rerio (Zebrafish).